Here is a 132-residue protein sequence, read N- to C-terminus: uncharacterized protein (132 aa).

Transmembrane regions (helical) follow at residues 15–37 (FPEYVAFVVSLSYALNATLLLLY), 49–71 (AFIPVTLSFVAIDFTSIQGLRLF), 81–103 (VILTSLCILEGLALALTSSLALV), and 110–129 (LAATWIAANVASSGLFMAFV).

It localises to the cell membrane. This is an uncharacterized protein from Archaeoglobus fulgidus (strain ATCC 49558 / DSM 4304 / JCM 9628 / NBRC 100126 / VC-16).